The following is a 266-amino-acid chain: Undecaprenyl-diphosphatase (266 aa).

The next 8 helical transmembrane spans lie at 1–21, 39–59, 86–106, 117–137, 153–173, 190–210, 216–236, and 246–266; these read MDFL…FIPV, PGSS…FWYF, SIFI…LFVT, FSIA…DIST, FIGI…GATI, SFLL…ITSI, FPFL…LLAI, and NGLK…ILNL.

Belongs to the UppP family.

The protein resides in the cell inner membrane. It carries out the reaction di-trans,octa-cis-undecaprenyl diphosphate + H2O = di-trans,octa-cis-undecaprenyl phosphate + phosphate + H(+). Catalyzes the dephosphorylation of undecaprenyl diphosphate (UPP). Confers resistance to bacitracin. The chain is Undecaprenyl-diphosphatase from Prochlorococcus marinus (strain MIT 9515).